A 297-amino-acid polypeptide reads, in one-letter code: Nicotinate-nucleotide pyrophosphorylase [carboxylating] (297 aa).

An important for hexamer formation region spans residues 8-12 (LLLPP). Quinolinate contacts are provided by residues arginine 102, 138–139 (RK), 160–161 (HR), lysine 171, glutamate 201, aspartate 222, 248–250 (SGG), and glycine 270.

The protein belongs to the NadC/ModD family. Hexamer formed by 3 homodimers.

The enzyme catalyses nicotinate beta-D-ribonucleotide + CO2 + diphosphate = quinolinate + 5-phospho-alpha-D-ribose 1-diphosphate + 2 H(+). The protein operates within cofactor biosynthesis; NAD(+) biosynthesis; nicotinate D-ribonucleotide from quinolinate: step 1/1. Its activity is regulated as follows. Activity toward QA is slightly repressed by phosphoribosylpyrophosphate (PRPP) in both a competitive and a non-competitive manner. Competitively inhibited by phthalic acid (PHT). In terms of biological role, involved in the catabolism of quinolinic acid (QA). This is Nicotinate-nucleotide pyrophosphorylase [carboxylating] (QPRT) from Homo sapiens (Human).